Here is an 82-residue protein sequence, read N- to C-terminus: Sec-independent protein translocase protein TatA (82 aa).

A helical transmembrane segment spans residues 1–21 (MGSFSIWHWLIVLLIVVMVFG). The segment at 46 to 82 (GASTDDSATTSAPAGQVTNNSTAADKTTIDVEAKHKS) is disordered. Positions 49-70 (TDDSATTSAPAGQVTNNSTAAD) are enriched in polar residues. Positions 72–82 (TTIDVEAKHKS) are enriched in basic and acidic residues.

The protein belongs to the TatA/E family. In terms of assembly, the Tat system comprises two distinct complexes: a TatABC complex, containing multiple copies of TatA, TatB and TatC subunits, and a separate TatA complex, containing only TatA subunits. Substrates initially bind to the TatABC complex, which probably triggers association of the separate TatA complex to form the active translocon.

Its subcellular location is the cell inner membrane. Its function is as follows. Part of the twin-arginine translocation (Tat) system that transports large folded proteins containing a characteristic twin-arginine motif in their signal peptide across membranes. TatA could form the protein-conducting channel of the Tat system. This is Sec-independent protein translocase protein TatA from Acidovorax sp. (strain JS42).